The primary structure comprises 839 residues: Amyloid-beta A4 precursor protein-binding family A member 1 (839 aa).

Disordered regions lie at residues 1-118, 235-346, and 362-437; these read MNHL…DESA, RLHH…EKRD, and VKTR…ESRK. Residues 23–38 are compositionally biased toward acidic residues; the sequence is ESVEADLEHPEVEEEQ. Position 79 is a phosphoserine (serine 79). Basic and acidic residues-rich tracts occupy residues 103–112 and 237–255; these read DGYEAERAQD and HHYDERSDGESDSPEKEAE. A munc-18-1 binding region spans residues 227-315; that stretch reads YRQEALGARL…TPGGGHPDSP (89 aa). Phosphoserine occurs at positions 243, 247, 249, 264, 281, and 286. Threonine 306 is modified (phosphothreonine). A phosphoserine mark is found at serine 314 and serine 369. Position 372 is a phosphothreonine (threonine 372). Residues 375 to 438 form an LIN-2/CASK binding region; the sequence is EPKEPIWVMR…ASTNKESRKS (64 aa). The span at 389–400 shows a compositional bias: basic and acidic residues; it reads PTRDCDDQRPVD. The span at 401 to 417 shows a compositional bias: low complexity; sequence GDSPSPGSSSPLGAESS. Serine 403, serine 405, serine 410, and serine 570 each carry phosphoserine. In terms of domain architecture, PID spans 459–645; the sequence is DGIIFAANYL…LLNTQDMYND (187 aa). The interval 628–643 is autoinhibitory helix linker; it reads LSQKEYSDLLNTQDMY. PDZ domains follow at residues 658–744 and 749–824; these read DVFI…IVRC and TVLI…TMPA.

Part of a multimeric complex containing STXBP1 and STX1A. Interacts with STXBP1. Component of the brain-specific heterotrimeric complex (LIN-10-LIN-2-LIN-7 complex) composed of at least APBA1, CASK, and LIN7, which associates with the motor protein KIF17 to transport vesicles along microtubules. Within the complex, interacts (via PDZ domain) with the motor protein KIF17; the interaction is direct and is required for association of KIF17 with the cargo that is to be transported. Binds to the cytoplasmic domain of amyloid protein (APP). Interacts (via PDZ 1 and 2 domains) with FSPB. Isoform 2 interacts (via its truncated PID domain) with active, GTP-bound RAB6A and RAB6B. As to expression, brain. Detected in the cerebellum, hippocampus, olfactory system, piriform and entorhinal cortex, supraoptic nucleus of the hypothalamus, substantia nigra, and other mesencephalic areas.

The protein resides in the cytoplasm. The protein localises to the perinuclear region. It localises to the nucleus. It is found in the golgi apparatus. In terms of biological role, putative function in synaptic vesicle exocytosis by binding to Munc18-1, an essential component of the synaptic vesicle exocytotic machinery. May modulate processing of the amyloid-beta precursor protein (APP) and hence formation of APP-beta. In Rattus norvegicus (Rat), this protein is Amyloid-beta A4 precursor protein-binding family A member 1 (Apba1).